We begin with the raw amino-acid sequence, 282 residues long: tRNA U34 carboxymethyltransferase (282 aa).

Carboxy-S-adenosyl-L-methionine-binding positions include K54, W68, K73, G92, 114 to 116, Y161, and R276; that span reads DPS.

Belongs to the class I-like SAM-binding methyltransferase superfamily. CmoB family. Homotetramer.

It carries out the reaction carboxy-S-adenosyl-L-methionine + 5-hydroxyuridine(34) in tRNA = 5-carboxymethoxyuridine(34) in tRNA + S-adenosyl-L-homocysteine + H(+). Functionally, catalyzes carboxymethyl transfer from carboxy-S-adenosyl-L-methionine (Cx-SAM) to 5-hydroxyuridine (ho5U) to form 5-carboxymethoxyuridine (cmo5U) at position 34 in tRNAs. This Campylobacter fetus subsp. fetus (strain 82-40) protein is tRNA U34 carboxymethyltransferase.